The sequence spans 522 residues: Lysine--tRNA ligase (522 aa).

The 'HIGH' region signature appears at 44 to 52 (PSGLPHIGT). The 'KMSKS' region motif lies at 290–294 (KISKS). Lys-293 provides a ligand contact to ATP.

The protein belongs to the class-I aminoacyl-tRNA synthetase family.

It is found in the cytoplasm. The catalysed reaction is tRNA(Lys) + L-lysine + ATP = L-lysyl-tRNA(Lys) + AMP + diphosphate. The sequence is that of Lysine--tRNA ligase from Rickettsia massiliae (strain Mtu5).